Reading from the N-terminus, the 715-residue chain is Fatty acid oxidation complex subunit alpha (715 aa).

The enoyl-CoA hydratase stretch occupies residues 8-197 (NSQPSAFSLT…NLGLVEEAVP (190 aa)). A 3-hydroxyacyl-CoA dehydrogenase region spans residues 313 to 715 (ATIKKVGVLG…MANEEQSFYS (403 aa)).

In the N-terminal section; belongs to the enoyl-CoA hydratase/isomerase family. It in the central section; belongs to the 3-hydroxyacyl-CoA dehydrogenase family. In terms of assembly, heterotetramer of two alpha chains (FadJ) and two beta chains (FadI).

It is found in the cytoplasm. It carries out the reaction a (3S)-3-hydroxyacyl-CoA = a (2E)-enoyl-CoA + H2O. It catalyses the reaction a 4-saturated-(3S)-3-hydroxyacyl-CoA = a (3E)-enoyl-CoA + H2O. The enzyme catalyses a (3S)-3-hydroxyacyl-CoA + NAD(+) = a 3-oxoacyl-CoA + NADH + H(+). The catalysed reaction is (3S)-3-hydroxybutanoyl-CoA = (3R)-3-hydroxybutanoyl-CoA. Its pathway is lipid metabolism; fatty acid beta-oxidation. In terms of biological role, catalyzes the formation of a hydroxyacyl-CoA by addition of water on enoyl-CoA. Also exhibits 3-hydroxyacyl-CoA epimerase and 3-hydroxyacyl-CoA dehydrogenase activities. The chain is Fatty acid oxidation complex subunit alpha from Photobacterium profundum (strain SS9).